A 271-amino-acid polypeptide reads, in one-letter code: uncharacterized protein (271 aa).

This is an uncharacterized protein from Azospirillum brasilense.